Here is a 418-residue protein sequence, read N- to C-terminus: Lactate dehydrogenase (NAD(+),ferredoxin) subunit LctC (418 aa).

Residues arginine 285, 325–328, 343–348, asparagine 362, and 380–381 each bind FAD; these read IGLS, SGAVQF, and DL.

Belongs to the ETF alpha-subunit/FixB family. Part of the stable heterotrimeric lactate dehydrogenase-Etf complex, which is formed by the lactate dehydrogenase LctD and the electron-transferring flavoprotein (Etf) alpha (LctC) and beta (LctB) subunits. FAD serves as cofactor. The cofactor is [4Fe-4S] cluster.

The protein localises to the cytoplasm. The catalysed reaction is lactate + 2 reduced [2Fe-2S]-[ferredoxin] + 2 NAD(+) = 2 oxidized [2Fe-2S]-[ferredoxin] + pyruvate + 2 NADH. With respect to regulation, activity is stimulated by divalent cations. Highest stimulation is observed with Ca(2+). Its function is as follows. The lactate dehydrogenase-Etf complex catalyzes the oxidation of lactate to pyruvate. It uses flavin-based electron confurcation to drive endergonic lactate oxidation with NAD(+) as oxidant at the expense of simultaneous exergonic electron flow from reduced ferredoxin to NAD(+). The electron transfer flavoprotein (Etf) mediates the electron transfer between the different donors and acceptors. The polypeptide is Lactate dehydrogenase (NAD(+),ferredoxin) subunit LctC (Acetobacterium woodii (strain ATCC 29683 / DSM 1030 / JCM 2381 / KCTC 1655 / WB1)).